Here is a 267-residue protein sequence, read N- to C-terminus: MKQSKKLGQCFLKDKNFVKKAIKSADITENDIVLEVGLGEGALTKELAKLAKFVYVIELDMRLEPFANQIMSEFKNVKVIWNDALKVDLKELGFNKIVANLPYQISSPITFKFLENDFDVAVLMYQYEFAKRMIGKPDTDEYSRLSVSIQYNSDVEFICKVPPTAFSPKPDVNSAIVKLTKREPLFHIENEEFFRNVLNAIFQHRNRTVKRALIDSSHEMNIERERLKEILENIKLDFDFSERVFKLAPEKIGELSNILYLNIISKK.

Residues Leu12, Gly37, Glu58, Asp83, and Asn100 each contribute to the S-adenosyl-L-methionine site.

This sequence belongs to the class I-like SAM-binding methyltransferase superfamily. rRNA adenine N(6)-methyltransferase family. RsmA subfamily.

It localises to the cytoplasm. Its function is as follows. Specifically dimethylates two adjacent adenosines in the loop of a conserved hairpin near the 3'-end of 16S rRNA in the 30S particle. May play a critical role in biogenesis of 30S subunits. The polypeptide is Probable ribosomal RNA small subunit methyltransferase A (Methanococcus vannielii (strain ATCC 35089 / DSM 1224 / JCM 13029 / OCM 148 / SB)).